The chain runs to 252 residues: 3-dehydroquinate dehydratase (252 aa).

Residues 46–48 and arginine 82 contribute to the 3-dehydroquinate site; that span reads EWR. Histidine 143 functions as the Proton donor/acceptor in the catalytic mechanism. Lysine 170 acts as the Schiff-base intermediate with substrate in catalysis. Residues arginine 212, serine 231, and glutamine 235 each coordinate 3-dehydroquinate.

The protein belongs to the type-I 3-dehydroquinase family. Homodimer.

It catalyses the reaction 3-dehydroquinate = 3-dehydroshikimate + H2O. The protein operates within metabolic intermediate biosynthesis; chorismate biosynthesis; chorismate from D-erythrose 4-phosphate and phosphoenolpyruvate: step 3/7. In terms of biological role, involved in the third step of the chorismate pathway, which leads to the biosynthesis of aromatic amino acids. Catalyzes the cis-dehydration of 3-dehydroquinate (DHQ) and introduces the first double bond of the aromatic ring to yield 3-dehydroshikimate. This Listeria monocytogenes serovar 1/2a (strain ATCC BAA-679 / EGD-e) protein is 3-dehydroquinate dehydratase.